A 72-amino-acid polypeptide reads, in one-letter code: Large ribosomal subunit protein bL31 (72 aa).

Cys16, Cys18, Cys38, and Cys41 together coordinate Zn(2+).

It belongs to the bacterial ribosomal protein bL31 family. Type A subfamily. As to quaternary structure, part of the 50S ribosomal subunit. Zn(2+) is required as a cofactor.

Binds the 23S rRNA. The protein is Large ribosomal subunit protein bL31 of Azoarcus sp. (strain BH72).